The sequence spans 275 residues: Diaminopimelate epimerase (275 aa).

3 residues coordinate substrate: asparagine 12, glutamine 45, and asparagine 65. Catalysis depends on cysteine 74, which acts as the Proton donor. Substrate is bound by residues 75 to 76, asparagine 158, asparagine 191, and 209 to 210; these read GN and ER. Residue cysteine 218 is the Proton acceptor of the active site. Position 219-220 (219-220) interacts with substrate; that stretch reads GT.

The protein belongs to the diaminopimelate epimerase family. As to quaternary structure, homodimer.

It localises to the cytoplasm. It catalyses the reaction (2S,6S)-2,6-diaminopimelate = meso-2,6-diaminopimelate. It functions in the pathway amino-acid biosynthesis; L-lysine biosynthesis via DAP pathway; DL-2,6-diaminopimelate from LL-2,6-diaminopimelate: step 1/1. In terms of biological role, catalyzes the stereoinversion of LL-2,6-diaminopimelate (L,L-DAP) to meso-diaminopimelate (meso-DAP), a precursor of L-lysine and an essential component of the bacterial peptidoglycan. The chain is Diaminopimelate epimerase from Shewanella baltica (strain OS223).